We begin with the raw amino-acid sequence, 230 residues long: Somatolactin (230 aa).

Positions 1-23 (MIKTKVLQAWMGIWLCAVNGLLG) are cleaved as a signal peptide. Disulfide bonds link Cys-28-Cys-38, Cys-87-Cys-202, and Cys-219-Cys-227. Asn-177 is a glycosylation site (N-linked (GlcNAc...) asparagine).

Belongs to the somatotropin/prolactin family.

The protein localises to the secreted. The chain is Somatolactin from Ictalurus punctatus (Channel catfish).